The primary structure comprises 632 residues: Probable potassium transport system protein Kup 3 (632 aa).

12 helical membrane passes run 17-37 (LFYL…TSPL), 60-80 (LISL…VLFL), 106-126 (TAIL…DAMI), 144-164 (PSLS…LFVV), 175-195 (FFGP…ISHI), 210-230 (AVSF…AVFL), 254-274 (WFLL…ALVL), 292-312 (ALLP…QAVI), 344-364 (IFVP…VLSF), 370-390 (LATA…IMAF), 401-421 (LPLA…FLGA), and 426-446 (IHDG…IMWT).

This sequence belongs to the HAK/KUP transporter (TC 2.A.72) family.

The protein resides in the cell inner membrane. The enzyme catalyses K(+)(in) + H(+)(in) = K(+)(out) + H(+)(out). In terms of biological role, transport of potassium into the cell. Likely operates as a K(+):H(+) symporter. This is Probable potassium transport system protein Kup 3 from Rhizobium etli (strain ATCC 51251 / DSM 11541 / JCM 21823 / NBRC 15573 / CFN 42).